The primary structure comprises 420 residues: Putative transporter AmpG 3 (420 aa).

The next 12 helical transmembrane spans lie at 6 to 26, 41 to 61, 79 to 99, 104 to 124, 141 to 161, 166 to 186, 230 to 250, 274 to 294, 297 to 317, 324 to 344, 359 to 381, and 386 to 406; these read YLIG…LIFF, IVGS…WSPF, GWAL…LKRS, LCIT…QDIV, IAFT…SVGA, IIFG…VGPI, LLLI…PMAM, LLIM…IGIF, VLIG…LATI, FIIT…IISI, YSIS…GICA, and WPVF…IFYI.

This sequence belongs to the major facilitator superfamily.

Its subcellular location is the cell inner membrane. The polypeptide is Putative transporter AmpG 3 (ampG3) (Rickettsia typhi (strain ATCC VR-144 / Wilmington)).